The primary structure comprises 397 residues: MTWDDHKKNFARLARDGGYTIAQYAAEFNLNPNTARRYLRAFKEDTRTADSRKPNKPVRKPLKSMIIDHSNDQHAGDHIAAEIAEKQRVNAVVSAAVENAKRQNKRINDRSDDHDVINRAHRTLRDRLERDTLDDDGERFEFEAGDYLIDNVEARKAARAMLRRSGADVLETTLLEKSLSHLLMLENARDTCIRLVQEMRDQQKDDDEGTPPEYRIASMLNSCSAQISSLINTIYSIRNNYRKESREAEKHALSMGQAGIVKLAYERKRENNWSVLEAAEFIEAHGGKVPPLMLEQIKADLRAPKTNTDDEENQTASGAPSLEDLDKIARERAASRRADAALWIEHRREEIADIVDTGGYGDVDAEGISNEAWLEQDLDEDEEEDEEVTRKLYGDDD.

Over residues 43-53 (KEDTRTADSRK) the composition is skewed to basic and acidic residues. 3 disordered regions span residues 43–62 (KEDT…RKPL), 304–325 (PKTN…LEDL), and 356–397 (DTGG…GDDD). Over residues 374-387 (LEQDLDEDEEEDEE) the composition is skewed to acidic residues. Over residues 388–397 (VTRKLYGDDD) the composition is skewed to basic and acidic residues.

In terms of assembly, multimer of two distinct subunits.

Its function is as follows. Necessary for recognition and cleavage of the phage packaging site (pac), together with the pacB protein. Both are probably the two major subunits of the phage PACase. This Escherichia coli (Bacteriophage P7) protein is Terminase A protein (pacA).